The sequence spans 296 residues: Phosphatidylglycerol--prolipoprotein diacylglyceryl transferase (296 aa).

The next 4 membrane-spanning stretches (helical) occupy residues 28-48 (WYGL…IYLA), 72-92 (FALY…ILFY), 110-130 (GGLA…IFSW), and 139-159 (LTFL…AFMI). Arg160 contacts a 1,2-diacyl-sn-glycero-3-phospho-(1'-sn-glycerol). Helical transmembrane passes span 197–217 (VQLY…FLSY), 226–246 (GWVT…AEFF), and 263–283 (GQIL…ACFL).

This sequence belongs to the Lgt family.

The protein localises to the cell inner membrane. It carries out the reaction L-cysteinyl-[prolipoprotein] + a 1,2-diacyl-sn-glycero-3-phospho-(1'-sn-glycerol) = an S-1,2-diacyl-sn-glyceryl-L-cysteinyl-[prolipoprotein] + sn-glycerol 1-phosphate + H(+). The protein operates within protein modification; lipoprotein biosynthesis (diacylglyceryl transfer). Its function is as follows. Catalyzes the transfer of the diacylglyceryl group from phosphatidylglycerol to the sulfhydryl group of the N-terminal cysteine of a prolipoprotein, the first step in the formation of mature lipoproteins. This Chlamydia caviae (strain ATCC VR-813 / DSM 19441 / 03DC25 / GPIC) (Chlamydophila caviae) protein is Phosphatidylglycerol--prolipoprotein diacylglyceryl transferase.